Reading from the N-terminus, the 320-residue chain is Cytochrome f (320 aa).

The signal sequence occupies residues 1 to 35 (MQIRNTFSSLKGEITRFISVSLMIYIITRASISNA). Positions 36, 56, 59, and 60 each coordinate heme. The helical transmembrane segment at 286-306 (VQGLLFFLASVVLAQIFLVLK) threads the bilayer.

This sequence belongs to the cytochrome f family. In terms of assembly, the 4 large subunits of the cytochrome b6-f complex are cytochrome b6, subunit IV (17 kDa polypeptide, petD), cytochrome f and the Rieske protein, while the 4 small subunits are PetG, PetL, PetM and PetN. The complex functions as a dimer. Requires heme as cofactor.

The protein resides in the plastid. Its subcellular location is the chloroplast thylakoid membrane. Its function is as follows. Component of the cytochrome b6-f complex, which mediates electron transfer between photosystem II (PSII) and photosystem I (PSI), cyclic electron flow around PSI, and state transitions. The chain is Cytochrome f from Citrus sinensis (Sweet orange).